The sequence spans 173 residues: uncharacterized protein (173 aa).

This is an uncharacterized protein from Haemophilus influenzae (strain ATCC 51907 / DSM 11121 / KW20 / Rd).